We begin with the raw amino-acid sequence, 296 residues long: 4-hydroxybenzoate octaprenyltransferase (296 aa).

Transmembrane regions (helical) follow at residues 28-48, 51-71, 102-122, 143-163, 174-194, 212-232, 233-253, and 274-294; these read IGTL…SDGI, LAVL…GCVI, LLLT…LNHL, FFPI…PMAF, AWIL…VYAM, FGRY…LLMA, VLGA…IVLL, and FLAN…HTFF.

Belongs to the UbiA prenyltransferase family. Mg(2+) serves as cofactor.

The protein resides in the cell inner membrane. It catalyses the reaction all-trans-octaprenyl diphosphate + 4-hydroxybenzoate = 4-hydroxy-3-(all-trans-octaprenyl)benzoate + diphosphate. It functions in the pathway cofactor biosynthesis; ubiquinone biosynthesis. Its function is as follows. Catalyzes the prenylation of para-hydroxybenzoate (PHB) with an all-trans polyprenyl group. Mediates the second step in the final reaction sequence of ubiquinone-8 (UQ-8) biosynthesis, which is the condensation of the polyisoprenoid side chain with PHB, generating the first membrane-bound Q intermediate 3-octaprenyl-4-hydroxybenzoate. The polypeptide is 4-hydroxybenzoate octaprenyltransferase (Neisseria meningitidis serogroup B (strain ATCC BAA-335 / MC58)).